The following is a 447-amino-acid chain: N-succinylarginine dihydrolase (447 aa).

Residues 19–28 (AGLSFGNEAS), asparagine 110, and 137–138 (HR) contribute to the substrate site. Residue glutamate 174 is part of the active site. Arginine 212 contacts substrate. The active site involves histidine 248. Substrate-binding residues include aspartate 250 and asparagine 359. The active-site Nucleophile is cysteine 365.

This sequence belongs to the succinylarginine dihydrolase family. As to quaternary structure, homodimer.

It carries out the reaction N(2)-succinyl-L-arginine + 2 H2O + 2 H(+) = N(2)-succinyl-L-ornithine + 2 NH4(+) + CO2. It functions in the pathway amino-acid degradation; L-arginine degradation via AST pathway; L-glutamate and succinate from L-arginine: step 2/5. In terms of biological role, catalyzes the hydrolysis of N(2)-succinylarginine into N(2)-succinylornithine, ammonia and CO(2). This Escherichia coli O7:K1 (strain IAI39 / ExPEC) protein is N-succinylarginine dihydrolase.